We begin with the raw amino-acid sequence, 230 residues long: MSSVTTPAPVYTWTADEAIKFLKEWNFSLGIILLFITIILQFGYTSRSMFVYVIKMIILWLMWPLTIILTIFNCVYALNNVYLGFSIVFTIVAIIMWIVYFVNSIRLFIRTGSWWSFNPETNNLMCIDMKGRMYVRPIIEDYHTLTVTIIRGHLYMQGIKLGTGYSLSDLPAYVTVAKVSHLLTYKRGFLDKIGDTSGFAVYVKSKVGNYRLPSTQKGSGMDTALLRNNI.

The Virion surface segment spans residues 1 to 24; that stretch reads MSSVTTPAPVYTWTADEAIKFLKE. Residues 25-45 form a helical membrane-spanning segment; the sequence is WNFSLGIILLFITIILQFGYT. At 46–55 the chain is on the intravirion side; that stretch reads SRSMFVYVIK. Residues 56–76 traverse the membrane as a helical segment; it reads MIILWLMWPLTIILTIFNCVY. At 77 to 84 the chain is on the virion surface side; it reads ALNNVYLG. The helical transmembrane segment at 85 to 105 threads the bilayer; sequence FSIVFTIVAIIMWIVYFVNSI. Over 106 to 228 the chain is Intravirion; that stretch reads RLFIRTGSWW…SGMDTALLRN (123 aa).

Belongs to the betacoronaviruses M protein family. Homomultimer. Interacts with envelope E protein in the budding compartment of the host cell, which is located between endoplasmic reticulum and the Golgi complex. Forms a complex with HE and S proteins. Interacts with nucleocapsid N protein. This interaction probably participates in RNA packaging into the virus.

Its subcellular location is the virion membrane. The protein localises to the host Golgi apparatus membrane. Functionally, component of the viral envelope that plays a central role in virus morphogenesis and assembly via its interactions with other viral proteins. The polypeptide is Membrane protein (Bos taurus (Bovine)).